A 1499-amino-acid chain; its full sequence is MMMARKQDVRIPTYNISVVGLSGTEKEKGQCGIGKSCLCNRFVRPSADEFHLDHTSVLSTSDFGGRVVNNDHFLYWGEVSRSLEDCVECKMHIVEQTEFIDDQTFQPHRSTALQPYIKRAAATKLASAEKLMYFCTDQLGLEQDFEQKQMPDGKLLVDGFLLGIDVSRGMNRNFDDQLKFVSNLYNQLAKTKKPIVVVLTKCDEGVERYIRDAHTFALSKKNLQVVETSARSNVNVDLAFSTLVQLIDKSRGKTKIIPYFEALKQQSQQIATAKDKYEWLVSRIVKNHNENWPSVSRKMQASPEYQDYVYLEGTQKAKKLFLQHIHRLKHEHIERRRKLYLAALPLAFEALIPNLDEVDHLSCIKAKKLLETKPEFLKWFVVLEETPWDATSHIDNMENERIPFDLMDTVPAEQLYETHLEKLRNERKRAEMRRAFKENLETSPFITPGKPWEEARSFIMNEDFYQWLEESVYMDIYGKHQKQIIDRAKEEFQELLLEYSELFYELELDAKPSKEKMGVIQDVLGEEQRFKALQKLQAERDALILKHIHFVYHPTKETCPSCPACVDAKIEHLISSRFIRPSDRNQKNSLSDLNIDRINLVILGKDGLARELANEIRALCTNDDKYVIDGKMYELSLRPIEGNVRLPVNSFQTPTFQPHGCLCLYNSKESLSYVVESIEKSRESTLGRRDNHLVHLPLTLILVNKRGDTSGETLHSLIQQGQQIASKLQCVFLDPASAGIGYGRNINEKQISQVLKGLLDSKRNLNLVSSTASIKDLADVDLRIVMCLMCGDPFSADDVLSPVLQSQTCKSSHCGSSNSVLLELPIGLHKKRIELSVLSYHSSFSIRKSRLVHGYIVFYSAKRKASLAMLRAFLCEVQDIIPIQLVALTDGAIDVLDNDLSREQLTEGEEIAQEIDGRFTSIPCSQPQHKLELFHPFFKDVVEKKNIIEATHMYDNVAEACSTTEEVFNSPRAGSPLCNSNLQDSEEDVEPPSYHLFREDATLPSLSKDHSKFSMELEGNDGLSFIMSNFESKLNNKVPPPVKPKPPVHFDITKDLSYLDQGHREGQRKSMSSSPWMPQDGFDPSDYAEPMDAVVKPRNEEENIYSVPHDSTQGKIITIRNINKAQSNGSGNGSDSEMDTSSLERGRKVSAVSKPVLYRTRCTRLGRFASYRTSFSVGSDDELGPIRKKEEDQASQGYKGDNAVIPYETDEDPRRRNILRSLRRNTKKPKPKPRPSITKATWESNYFGVPLTTVVTPEKPIPIFIERCIEYIEATGLSTEGIYRVSGNKSEMESLQRQFDQDHNLDLAEKDFTVNTVAGAMKSFFSELPDPLVPYSMQIDLVEAHKINDREQKLHALKEVLKKFPKENHEVFKYVISHLNKVSHNNKVNLMTSENLSICFWPTLMRPDFSSMDALTATRSYQTIIELFIQQCPFFFYNRPISEPPGAAPGSPSAMAPTVPFLTSTPATSQPSPPQSPPPTPQSPMQPLLSSQLQAEHTL.

The has GTPase activity, required for proper localization stretch occupies residues 1–266 (MMMARKQDVR…IPYFEALKQQ (266 aa)). GTP-binding positions include K28, 33-37 (IGKSC), L52, S56, 95-97 (EQT), 201-203 (KCD), and 229-231 (SAR). 4 consecutive FF domains span residues 270–327 (IATA…HIHR), 368–422 (KLLE…HLEK), 429–483 (RAEM…HQKQ), and 485–550 (IDRA…HIHF). At Y308 the chain carries Phosphotyrosine. Position 589 is a phosphoserine (S589). Positions 592 to 767 (DLNIDRINLV…LLDSKRNLNL (176 aa)) constitute a pG1 pseudoGTPase domain. S770 and S773 each carry phosphoserine. A pG2 pseudoGTPase domain is found at 783–947 (RIVMCLMCGD…FKDVVEKKNI (165 aa)). Phosphoserine occurs at positions 970, 975, 985, and 1072. Residue Y1087 is modified to Phosphotyrosine. Y1105 carries the phosphotyrosine; by ABL2 and PTK6 modification. A compositionally biased stretch (polar residues) spans 1124 to 1141 (KAQSNGSGNGSDSEMDTS). Residues 1124–1148 (KAQSNGSGNGSDSEMDTSSLERGRK) are disordered. 6 positions are modified to phosphoserine: S1134, S1142, S1150, S1176, S1179, and S1221. Residues 1177 to 1207 (VGSDDELGPIRKKEEDQASQGYKGDNAVIPY) are disordered. A required for phospholipid binding and regulation of the substrate preference region spans residues 1213 to 1236 (PRRRNILRSLRRNTKKPKPKPRPS). The residue at position 1226 (T1226) is a Phosphothreonine. Position 1236 is a phosphoserine (S1236). The 188-residue stretch at 1249 to 1436 (VPLTTVVTPE…LFIQQCPFFF (188 aa)) folds into the Rho-GAP domain. The segment at 1446-1499 (GAAPGSPSAMAPTVPFLTSTPATSQPSPPQSPPPTPQSPMQPLLSSQLQAEHTL) is disordered. A compositionally biased stretch (low complexity) spans 1448-1470 (APGSPSAMAPTVPFLTSTPATSQ). Positions 1471–1484 (PSPPQSPPPTPQSP) are enriched in pro residues. Phosphoserine occurs at positions 1472 and 1476. Phosphothreonine is present on T1480. S1483 is subject to Phosphoserine. Positions 1485-1499 (MQPLLSSQLQAEHTL) are enriched in low complexity.

As to quaternary structure, interacts with the general transcription factor GTF2I, the interaction sequesters GTF2I in the cytoplasm. Interacts with RASA1. Phosphorylation of Tyr-1105 by PTK6 promotes the association with RASA1, inactivating RHOA while activating RAS. Phosphorylation at Tyr-308 by PDGFRA inhibits binding to GTF2I. Phosphorylated by PRKCA at Ser-1221 and Thr-1226, induces relocalization from the cytoplasm to regions of plasma membrane ruffling and prevents the binding and substrate specificity regulation by phospholipids. In brain, phosphorylated by FYN and SRC. During focal adhesion formation, phosphorylated by MAPK1 and MAPK3 at the C-terminal region, probably at Ser-1451, Ser-1476, Thr-1480 and Ser-1483. Phosphorylation by MAPK1 and MAPK3 inhibits GAP function and localizes ARGHAP35 away from newly forming focal adhesions and stress fibers in cells spreading on fibronectin. Phosphorylation at Ser-1476 and Thr-1480 by GSK3B requires priming by MAPK and inhibits RhoGAP activity and modulates polarized cell migration. Expressed in the developing kidneys. Expressed in all regions of the mature nervous system (at protein level). Detected in neutrophils (at protein level).

The protein resides in the cytoplasm. It localises to the cytoskeleton. Its subcellular location is the cilium basal body. The protein localises to the nucleus. It is found in the cell membrane. In terms of biological role, rho GTPase-activating protein (GAP). Binds several acidic phospholipids which inhibits the Rho GAP activity to promote the Rac GAP activity. This binding is inhibited by phosphorylation by PRKCA. Involved in cell differentiation as well as cell adhesion and migration, plays an important role in retinal tissue morphogenesis, neural tube fusion, midline fusion of the cerebral hemispheres and mammary gland branching morphogenesis. Transduces signals from p21-ras to the nucleus, acting via the ras GTPase-activating protein (GAP). Transduces SRC-dependent signals from cell-surface adhesion molecules, such as laminin, to promote neurite outgrowth. Regulates axon outgrowth, guidance and fasciculation. Modulates Rho GTPase-dependent F-actin polymerization, organization and assembly, is involved in polarized cell migration and in the positive regulation of ciliogenesis and cilia elongation. During mammary gland development, is required in both the epithelial and stromal compartments for ductal outgrowth. Represses transcription of the glucocorticoid receptor by binding to the cis-acting regulatory sequence 5'-GAGAAAAGAAACTGGAGAAACTC-3'; this function is however unclear and would need additional experimental evidences. This Mus musculus (Mouse) protein is Rho GTPase-activating protein 35.